Consider the following 111-residue polypeptide: Short neuropeptide F (111 aa).

The signal sequence occupies residues 1-24 (MSAMYAKRCAALVLLVVTVGLVNA). Positions 25–76 (TENYMDYGEEMAEKTPAENIHELYRLLLQRNTLDNAGFGGIPLEHLMIRKSQ) are excised as a propeptide. Phe-85 is subject to Phenylalanine amide. Positions 88-111 (SGPHVSARALPRPMGAVAGYDDNN) are excised as a propeptide.

As to expression, expressed throughout the central nervous system (at protein level).

Its subcellular location is the secreted. In terms of biological role, plays a role in controlling food intake and regulating body size. The protein is Short neuropeptide F of Camponotus floridanus (Florida carpenter ant).